The primary structure comprises 374 residues: Chaperone protein DnaJ (374 aa).

The region spanning 4 to 68 is the J domain; the sequence is DYYDILGVSR…QMRGRYDQFG (65 aa). A CR-type zinc finger spans residues 133-215; sequence GGEQQIRISH…CGGRGQNQVS (83 aa). Zn(2+)-binding residues include cysteine 146, cysteine 149, cysteine 163, cysteine 166, cysteine 189, cysteine 192, cysteine 203, and cysteine 206. CXXCXGXG motif repeat units follow at residues 146–153, 163–170, 189–196, and 203–210; these read CKTCEGTG, CSTCQGSG, CPTCNGQG, and CDSCGGRG.

This sequence belongs to the DnaJ family. Homodimer. It depends on Zn(2+) as a cofactor.

The protein resides in the cytoplasm. Functionally, participates actively in the response to hyperosmotic and heat shock by preventing the aggregation of stress-denatured proteins and by disaggregating proteins, also in an autonomous, DnaK-independent fashion. Unfolded proteins bind initially to DnaJ; upon interaction with the DnaJ-bound protein, DnaK hydrolyzes its bound ATP, resulting in the formation of a stable complex. GrpE releases ADP from DnaK; ATP binding to DnaK triggers the release of the substrate protein, thus completing the reaction cycle. Several rounds of ATP-dependent interactions between DnaJ, DnaK and GrpE are required for fully efficient folding. Also involved, together with DnaK and GrpE, in the DNA replication of plasmids through activation of initiation proteins. The protein is Chaperone protein DnaJ of Acaryochloris marina (strain MBIC 11017).